The sequence spans 396 residues: Probable sugar efflux transporter (396 aa).

The next 12 membrane-spanning stretches (helical) occupy residues 15 to 35, 50 to 70, 81 to 101, 103 to 123, 136 to 156, 169 to 189, 209 to 229, 246 to 266, 275 to 295, 301 to 321, 333 to 353, and 364 to 384; these read VVTLAIAAFIFNTTEFVPVGL, VGIMLTIYAWVVAVMSLPFML, LICLFVLFIASHVLSFLAWNF, VLVISRIGIAFAHAIFWSITA, AQALSLIATGTALAMVLGLPI, TFFAIGMGALITLLCLIKLLP, PALMSLYVLTVVVVTAHYTAY, FATVLLLILGGAGIIGSLVFG, SLVSIAIALLVICLLLLLPAA, LAILSIFWGIAIMVIGLGMQV, VAMALFSGIFNIGIGAGALVG, and AIGYIGAIPACAALVWAVLIF.

It belongs to the major facilitator superfamily. SotB (TC 2.A.1.2) family.

Its subcellular location is the cell inner membrane. Its function is as follows. Involved in the efflux of sugars. The physiological role may be the reduction of the intracellular concentration of toxic sugars or sugar metabolites. This chain is Probable sugar efflux transporter, found in Salmonella schwarzengrund (strain CVM19633).